Consider the following 96-residue polypeptide: Integration host factor subunit beta (96 aa).

The interval 59-78 is disordered; the sequence is RVGRNPKTGETVSLPGKYVP.

This sequence belongs to the bacterial histone-like protein family. As to quaternary structure, heterodimer of an alpha and a beta chain.

Its function is as follows. This protein is one of the two subunits of integration host factor, a specific DNA-binding protein that functions in genetic recombination as well as in transcriptional and translational control. The polypeptide is Integration host factor subunit beta (Thioalkalivibrio sulfidiphilus (strain HL-EbGR7)).